Here is a 91-residue protein sequence, read N- to C-terminus: Large ribosomal subunit protein uL23c (91 aa).

Belongs to the universal ribosomal protein uL23 family. As to quaternary structure, part of the 50S ribosomal subunit.

Its subcellular location is the plastid. It localises to the chloroplast. Its function is as follows. Binds to 23S rRNA. This is Large ribosomal subunit protein uL23c (rpl23) from Picea abies (Norway spruce).